Consider the following 289-residue polypeptide: Proteasome subunit beta (289 aa).

The propeptide at 1–59 is removed in mature form; by autocatalysis; the sequence is MEHTPRNAGFALPAAYMSTMTSSFIDFLKAEAPDLLPRARVENMPAVPGGGSAFEPPHG. Catalysis depends on Thr-60, which acts as the Nucleophile.

It belongs to the peptidase T1B family. As to quaternary structure, the 20S proteasome core is composed of 14 alpha and 14 beta subunits that assemble into four stacked heptameric rings, resulting in a barrel-shaped structure. The two inner rings, each composed of seven catalytic beta subunits, are sandwiched by two outer rings, each composed of seven alpha subunits. The catalytic chamber with the active sites is on the inside of the barrel. Has a gated structure, the ends of the cylinder being occluded by the N-termini of the alpha-subunits. Is capped by the proteasome-associated ATPase, ARC.

It localises to the cytoplasm. It catalyses the reaction Cleavage of peptide bonds with very broad specificity.. The protein operates within protein degradation; proteasomal Pup-dependent pathway. The formation of the proteasomal ATPase ARC-20S proteasome complex, likely via the docking of the C-termini of ARC into the intersubunit pockets in the alpha-rings, may trigger opening of the gate for substrate entry. Interconversion between the open-gate and close-gate conformations leads to a dynamic regulation of the 20S proteasome proteolysis activity. Functionally, component of the proteasome core, a large protease complex with broad specificity involved in protein degradation. This chain is Proteasome subunit beta, found in Saccharomonospora viridis (strain ATCC 15386 / DSM 43017 / JCM 3036 / CCUG 5913 / NBRC 12207 / NCIMB 9602 / P101) (Thermoactinomyces viridis).